Here is a 625-residue protein sequence, read N- to C-terminus: tRNA uridine 5-carboxymethylaminomethyl modification enzyme MnmG (625 aa).

Residue 14 to 19 (GAGHAG) coordinates FAD. Residue 273-287 (GPRYCPSIEDKIVRF) coordinates NAD(+).

The protein belongs to the MnmG family. As to quaternary structure, homodimer. Heterotetramer of two MnmE and two MnmG subunits. It depends on FAD as a cofactor.

The protein resides in the cytoplasm. NAD-binding protein involved in the addition of a carboxymethylaminomethyl (cmnm) group at the wobble position (U34) of certain tRNAs, forming tRNA-cmnm(5)s(2)U34. The polypeptide is tRNA uridine 5-carboxymethylaminomethyl modification enzyme MnmG (Clostridium botulinum (strain Okra / Type B1)).